The primary structure comprises 164 residues: Transcription antitermination protein NusB (164 aa).

Belongs to the NusB family.

Functionally, involved in transcription antitermination. Required for transcription of ribosomal RNA (rRNA) genes. Binds specifically to the boxA antiterminator sequence of the ribosomal RNA (rrn) operons. In Chlorobium limicola (strain DSM 245 / NBRC 103803 / 6330), this protein is Transcription antitermination protein NusB.